The chain runs to 117 residues: Transcription elongation factor SPT4 (117 aa).

Residues 1-40 (MALETVPKDLRHLRACLLCSLVKTIDQFEYDGCDNCDAYL) form an interaction with SUPT5H region. Residues 16–36 (CLLCSLVKTIDQFEYDGCDNC) form a C4-type zinc finger.

It belongs to the SPT4 family. In terms of assembly, interacts with SUPT5H to form the DSIF complex. DSIF interacts with RNA polymerase II and with the positive transcription elongation factor b complex (P-TEFb complex), which is composed of CDK9 and cyclin-T.

The protein localises to the nucleus. In terms of biological role, may function as a component of the DRB sensitivity-inducing factor complex (DSIF complex), which regulates transcription elongation by RNA polymerase II. Probably enhances transcriptional pausing at sites proximal to the promoter, which may in turn facilitate the assembly of an elongation competent RNA polymerase II complex. The protein is Transcription elongation factor SPT4 (supt4h1) of Xenopus laevis (African clawed frog).